The sequence spans 178 residues: Endoribonuclease YbeY (178 aa).

Residues histidine 118, histidine 122, and histidine 128 each contribute to the Zn(2+) site.

The protein belongs to the endoribonuclease YbeY family. Zn(2+) serves as cofactor.

It localises to the cytoplasm. Single strand-specific metallo-endoribonuclease involved in late-stage 70S ribosome quality control and in maturation of the 3' terminus of the 16S rRNA. The sequence is that of Endoribonuclease YbeY from Mycolicibacterium gilvum (strain PYR-GCK) (Mycobacterium gilvum (strain PYR-GCK)).